The following is a 274-amino-acid chain: UPF0173 metal-dependent hydrolase Adeh_1068 (274 aa).

The protein belongs to the UPF0173 family.

This chain is UPF0173 metal-dependent hydrolase Adeh_1068, found in Anaeromyxobacter dehalogenans (strain 2CP-C).